The chain runs to 416 residues: Inositol polyphosphate multikinase (416 aa).

A disordered region spans residues 1–38; it reads MATEPPSPLRVEAPGPPEMRTSPAIESTPEGTPQPAGG. An N-acetylalanine modification is found at alanine 2. Serine 7 carries the post-translational modification Phosphoserine. Lysine 75 provides a ligand contact to ATP. Arginine 82 contributes to the substrate binding site. Residues 131–133 and aspartate 144 each bind ATP; that span reads EDV. Substrate-binding positions include lysine 146, 160 to 167, and glutamine 196; that span reads KIQQQVSK. The short motif at 320–330 is the Nuclear localization signal element; sequence RHRKIYTKKHH. Aspartate 385 is an ATP binding site. Residue histidine 388 participates in substrate binding.

The protein belongs to the inositol phosphokinase (IPK) family. Mg(2+) is required as a cofactor. Ubiquitous, with the highest expression in skeletal muscle, liver, placenta, lung, peripheral blood leukocytes, kidney, spleen and colon.

It is found in the nucleus. It catalyses the reaction 1D-myo-inositol 1,4,5-trisphosphate + 2 ATP = 1D-myo-inositol 1,3,4,5,6-pentakisphosphate + 2 ADP + 2 H(+). It carries out the reaction 1D-myo-inositol 1,3,4,6-tetrakisphosphate + ATP = 1D-myo-inositol 1,3,4,5,6-pentakisphosphate + ADP + H(+). The catalysed reaction is 1-octadecanoyl-2-(5Z,8Z,11Z,14Z)-eicosatetraenoyl-sn-glycero-3-phospho-1D-myo-inositol 4,5-bisphosphate + ATP = 1-octadecanoyl-2-(5Z,8Z,11Z,14Z-eicosatetraenoyl)-sn-glycero-3-phospho-(1D-myo-inositol 3,4,5-triphosphate) + ADP + H(+). The enzyme catalyses a 1,2-diacyl-sn-glycero-3-phospho-(1D-myo-inositol-4,5-bisphosphate) + ATP = a 1,2-diacyl-sn-glycero-3-phospho-(1D-myo-inositol-3,4,5-trisphosphate) + ADP + H(+). It catalyses the reaction 1D-myo-inositol 1,4,5,6-tetrakisphosphate + ATP = 1D-myo-inositol 1,3,4,5,6-pentakisphosphate + ADP + H(+). It functions in the pathway phospholipid metabolism; phosphatidylinositol metabolism. Inhibited by flavonoids that occupy the ATP-binding pocket. Inhibited by myricetin, quercetin, luteolin, kaempferol, isorhamnetin and diosmetin, and to a lesser degree by rhamnetin and apigenin. Its function is as follows. Inositol phosphate kinase with a broad substrate specificity. Phosphorylates inositol 1,4,5-trisphosphate (Ins(1,4,5)P3) first to inositol 1,3,4,5-tetrakisphosphate and then to inositol 1,3,4,5,6-pentakisphosphate (Ins(1,3,4,5,6)P5). Phosphorylates inositol 1,3,4,6-tetrakisphosphate (Ins(1,3,4,6)P4). Phosphorylates inositol 1,4,5,6-tetrakisphosphate (Ins(1,4,5,6)P4). Phosphorylates glycero-3-phospho-1D-myo-inositol 4,5-bisphosphate to glycero-3-phospho-1D-myo-inositol 3,4,5-trisphosphate. Plays an important role in MLKL-mediated necroptosis via its role in the biosynthesis of inositol pentakisphosphate (InsP5) and inositol hexakisphosphate (InsP6). Binding of these highly phosphorylated inositol phosphates to MLKL mediates the release of an N-terminal auto-inhibitory region, leading to activation of the kinase. Essential for activated phospho-MLKL to oligomerize and localize to the cell membrane during necroptosis. Required for normal embryonic development, probably via its role in the biosynthesis of inositol 1,3,4,5,6-pentakisphosphate (Ins(1,3,4,5,6)P5) and inositol hexakisphosphate (InsP6). In Homo sapiens (Human), this protein is Inositol polyphosphate multikinase (IPMK).